The following is a 311-amino-acid chain: Olfactory receptor 8B8 (311 aa).

The Extracellular segment spans residues 1–25 (MAAENSSFVTQFILAGLTDQPGVQI). N-linked (GlcNAc...) asparagine glycosylation occurs at Asn-5. A helical membrane pass occupies residues 26 to 46 (PLFFLFLGFYVVTVVGNLGLI). Topologically, residues 47–54 (TLIRLNSH) are cytoplasmic. A helical membrane pass occupies residues 55–75 (LHTPMYFFLYNLSFIDFCYSS). The Extracellular portion of the chain corresponds to 76-99 (VITPKMLMSFVLKKNSISYAGCMT). Cys-97 and Cys-189 form a disulfide bridge. Residues 100–120 (QLFFFLFFVVSESFILSAMAY) traverse the membrane as a helical segment. The Cytoplasmic segment spans residues 121 to 139 (DRYVAICNPLLYMVTMSPQ). Residues 140–160 (VCFLLLLGVYGMGFAGAMAHT) form a helical membrane-spanning segment. Residues 161–197 (ACMMGVTFCANNLVNHYMCDILPLLECACTSTYVNEL) are Extracellular-facing. Residues 198–217 (VVFVVVGIDIGVPTVTIFIS) traverse the membrane as a helical segment. Over 218–237 (YALILSSIFHIDSTEGRSKA) the chain is Cytoplasmic. A helical transmembrane segment spans residues 238–258 (FSTCSSHIIAVSLFFGSGAFM). At 259 to 271 (YLKPFSLLAMNQG) the chain is on the extracellular side. Residues 272-292 (KVSSLFYTTVVPMLNPLIYSL) traverse the membrane as a helical segment. The Cytoplasmic portion of the chain corresponds to 293-311 (RNKDVKVALKKILNKNAFS).

It belongs to the G-protein coupled receptor 1 family. In terms of tissue distribution, expressed in the tongue and testis.

The protein localises to the cell membrane. In terms of biological role, odorant receptor (Potential). May be involved in taste perception. The protein is Olfactory receptor 8B8 of Homo sapiens (Human).